The primary structure comprises 274 residues: tRNA-cytidine(32) 2-sulfurtransferase (274 aa).

The PP-loop motif motif lies at 40–45 (SGGKDS). [4Fe-4S] cluster-binding residues include Cys-115, Cys-118, and Cys-206.

It belongs to the TtcA family. Homodimer. It depends on Mg(2+) as a cofactor. [4Fe-4S] cluster serves as cofactor.

It is found in the cytoplasm. The enzyme catalyses cytidine(32) in tRNA + S-sulfanyl-L-cysteinyl-[cysteine desulfurase] + AH2 + ATP = 2-thiocytidine(32) in tRNA + L-cysteinyl-[cysteine desulfurase] + A + AMP + diphosphate + H(+). The protein operates within tRNA modification. In terms of biological role, catalyzes the ATP-dependent 2-thiolation of cytidine in position 32 of tRNA, to form 2-thiocytidine (s(2)C32). The sulfur atoms are provided by the cysteine/cysteine desulfurase (IscS) system. This is tRNA-cytidine(32) 2-sulfurtransferase from Pseudomonas entomophila (strain L48).